The following is a 258-amino-acid chain: Type III pantothenate kinase (258 aa).

Aspartate 6–valine 13 contacts ATP. Substrate contacts are provided by residues tyrosine 100 and glycine 107–arginine 110. Residue aspartate 109 is the Proton acceptor of the active site. Aspartate 129 serves as a coordination point for K(+). ATP is bound at residue threonine 132. Residue threonine 184 coordinates substrate.

The protein belongs to the type III pantothenate kinase family. As to quaternary structure, homodimer. It depends on NH4(+) as a cofactor. Requires K(+) as cofactor.

The protein resides in the cytoplasm. It catalyses the reaction (R)-pantothenate + ATP = (R)-4'-phosphopantothenate + ADP + H(+). It functions in the pathway cofactor biosynthesis; coenzyme A biosynthesis; CoA from (R)-pantothenate: step 1/5. Catalyzes the phosphorylation of pantothenate (Pan), the first step in CoA biosynthesis. This Bacillus velezensis (strain DSM 23117 / BGSC 10A6 / LMG 26770 / FZB42) (Bacillus amyloliquefaciens subsp. plantarum) protein is Type III pantothenate kinase.